Consider the following 225-residue polypeptide: Urease accessory protein UreE (225 aa).

2 stretches are compositionally biased toward basic and acidic residues: residues 189–202 and 212–225; these read HSHD…EHEG and NSHD…HSRR. The disordered stretch occupies residues 189–225; the sequence is HSHDFMGHSHEHEGHRHVHNHAGNSHDNEHDEHHSRR.

Belongs to the UreE family.

The protein localises to the cytoplasm. Involved in urease metallocenter assembly. Binds nickel. Probably functions as a nickel donor during metallocenter assembly. This is Urease accessory protein UreE from Edwardsiella ictaluri.